Here is a 292-residue protein sequence, read N- to C-terminus: uncharacterized protein (292 aa).

Residues 1–59 (MTITQLKVFVKIAETGSFTKAGQALNMTQPAVSHAISAIEAELDVKLIIRDRRNGLMLT) form the HTH lysR-type domain. The segment at residues 18–37 (FTKAGQALNMTQPAVSHAIS) is a DNA-binding region (H-T-H motif).

Belongs to the LysR transcriptional regulatory family.

This is an uncharacterized protein from Bacillus subtilis (strain 168).